Reading from the N-terminus, the 247-residue chain is Pulmonary surfactant-associated protein A (247 aa).

The signal sequence occupies residues 1–19 (MWCSLALILILVTVSGIMC). Residue Asn-20 is glycosylated (N-linked (GlcNAc...) asparagine). In terms of domain architecture, Collagen-like spans 27-99 (GSPGIPGTPG…PGERGPPGLP (73 aa)). 4-hydroxyproline occurs at positions 29, 32, 35, 41, 53, 56, 62, 66, and 69. Positions 32–101 (PGTPGSHGLP…ERGPPGLPAS (70 aa)) are disordered. Residues 41–50 (PGRDGRDGVK) are compositionally biased toward basic and acidic residues. The span at 53–64 (PGPPGPMGPPGV) shows a compositional bias: pro residues. The segment covering 83 to 92 (ERGDKGDPGE) has biased composition (basic and acidic residues). Residues 131-247 (LAVGDKVFAT…LQSRLTICEF (117 aa)) form the C-type lectin domain. 2 disulfides stabilise this stretch: Cys-154–Cys-245 and Cys-223–Cys-237. N-linked (GlcNAc...) asparagine glycosylation is present at Asn-206. Positions 214, 216, 233, and 234 each coordinate Ca(2+).

This sequence belongs to the SFTPA family. As to quaternary structure, oligomeric complex of 6 set of homotrimers.

Its subcellular location is the secreted. It localises to the extracellular space. The protein localises to the extracellular matrix. The protein resides in the surface film. Functionally, in presence of calcium ions, it binds to surfactant phospholipids and contributes to lower the surface tension at the air-liquid interface in the alveoli of the mammalian lung and is essential for normal respiration. Enhances the expression of MYO18A/SP-R210 on alveolar macrophages. The polypeptide is Pulmonary surfactant-associated protein A (SFTPA1) (Cavia porcellus (Guinea pig)).